The chain runs to 366 residues: tRNA-specific 2-thiouridylase MnmA (366 aa).

ATP is bound by residues 6–13 (AMSGGVDS) and Leu32. Cys101 functions as the Nucleophile in the catalytic mechanism. A disulfide bridge connects residues Cys101 and Cys198. Gly125 is an ATP binding site. Positions 148-150 (KDQ) are interaction with tRNA. The active-site Cysteine persulfide intermediate is the Cys198.

This sequence belongs to the MnmA/TRMU family.

It is found in the cytoplasm. It catalyses the reaction S-sulfanyl-L-cysteinyl-[protein] + uridine(34) in tRNA + AH2 + ATP = 2-thiouridine(34) in tRNA + L-cysteinyl-[protein] + A + AMP + diphosphate + H(+). Functionally, catalyzes the 2-thiolation of uridine at the wobble position (U34) of tRNA, leading to the formation of s(2)U34. In Nocardioides sp. (strain ATCC BAA-499 / JS614), this protein is tRNA-specific 2-thiouridylase MnmA.